The sequence spans 348 residues: Myricetin O-methyltransferase (348 aa).

An N-acetylmethionine modification is found at Met1. The S-adenosyl-L-methionine site is built by Gly189, Asp212, Asp232, Met233, and Lys246. His250 functions as the Proton acceptor in the catalytic mechanism.

In terms of processing, the N-terminus is blocked.

The catalysed reaction is S-adenosyl-L-methionine + a 3'-hydroxyflavonoid = S-adenosyl-L-homocysteine + a 3'-methoxyflavonoid.. The enzyme catalyses S-adenosyl-L-methionine + a 5'-hydroxy-3'-methoxyflavonoid = S-adenosyl-L-homocysteine + a 3',5'-dimethoxyflavonoid.. Its function is as follows. Methylates myricetin and dihydromyricetin at 2 sites. Inactive towards 16-hydroxytabersonine, the phenylpropanoids 5-hydroxyferulate, caffeate and their CoA-esters, flavones and flavanones possessing 2 or 3 B-ring hydroxyl groups. In Catharanthus roseus (Madagascar periwinkle), this protein is Myricetin O-methyltransferase.